The following is a 67-amino-acid chain: uncharacterized protein (67 aa).

A helical transmembrane segment spans residues 12–34 (YYYAHQTVCITSTGFALCFVVQA).

Its subcellular location is the membrane. This is an uncharacterized protein from Saccharomyces cerevisiae (strain ATCC 204508 / S288c) (Baker's yeast).